Reading from the N-terminus, the 343-residue chain is Malate dehydrogenase, peroxisomal (343 aa).

NAD(+) contacts are provided by residues 8 to 14 and Asp-34; that span reads GASGGVG. Arg-80 and Arg-86 together coordinate substrate. Residues Asn-93 and 116-118 each bind NAD(+); that span reads ISN. Residues Asn-118 and Arg-152 each contribute to the substrate site. The active-site Proton acceptor is His-187. Residue Met-237 participates in NAD(+) binding.

It belongs to the LDH/MDH superfamily. MDH type 1 family. As to quaternary structure, homodimer.

It localises to the peroxisome. It catalyses the reaction (S)-malate + NAD(+) = oxaloacetate + NADH + H(+). In Saccharomyces cerevisiae (strain ATCC 204508 / S288c) (Baker's yeast), this protein is Malate dehydrogenase, peroxisomal (MDH3).